Reading from the N-terminus, the 102-residue chain is Glycoprotein 24A (102 aa).

Belongs to the csb family. Post-translationally, O-glycosylated.

It localises to the cell surface. Functionally, cell-cell adhesion during early development. In Dictyostelium discoideum (Social amoeba), this protein is Glycoprotein 24A (csbA).